Here is a 60-residue protein sequence, read N- to C-terminus: MAQIKITLTKSPIGRKPEQRKTVVALGLGKLNSSVVKEDNAAIRGMVTAISHLVTVEDVK.

The protein belongs to the universal ribosomal protein uL30 family. As to quaternary structure, part of the 50S ribosomal subunit.

The protein is Large ribosomal subunit protein uL30 of Streptococcus pyogenes serotype M1.